Here is a 459-residue protein sequence, read N- to C-terminus: Zinc finger and BTB domain-containing protein 9 (459 aa).

Residues 48-112 (CDVSLLVQGR…IYSGSLHLPL (65 aa)) enclose the BTB domain. The span at 178-189 (VRSSASTENSVL) shows a compositional bias: polar residues. Disordered regions lie at residues 178 to 200 (VRSSASTENSVLPESPAGGEGSE) and 212 to 274 (EEEE…ASQI). Glycyl lysine isopeptide (Lys-Gly) (interchain with G-Cter in SUMO2) cross-links involve residues Lys-285, Lys-293, and Lys-368. Positions 293–356 (KEKTKVLSGE…GGTGQAMHGP (64 aa)) are disordered. Residues 397-419 (FGCGICNKRFKLKHHLTEHMKTH) form a C2H2-type 1 zinc finger. The C2H2-type 2; atypical zinc-finger motif lies at 424–446 (HACPHCGRRFRVQAFFLRHRDLC).

It localises to the nucleus. In terms of biological role, may be involved in transcriptional regulation. This is Zinc finger and BTB domain-containing protein 9 (Zbtb9) from Mus musculus (Mouse).